A 226-amino-acid chain; its full sequence is 2-C-methyl-D-erythritol 4-phosphate cytidylyltransferase (226 aa).

It belongs to the IspD/TarI cytidylyltransferase family. IspD subfamily.

It catalyses the reaction 2-C-methyl-D-erythritol 4-phosphate + CTP + H(+) = 4-CDP-2-C-methyl-D-erythritol + diphosphate. Its pathway is isoprenoid biosynthesis; isopentenyl diphosphate biosynthesis via DXP pathway; isopentenyl diphosphate from 1-deoxy-D-xylulose 5-phosphate: step 2/6. Its function is as follows. Catalyzes the formation of 4-diphosphocytidyl-2-C-methyl-D-erythritol from CTP and 2-C-methyl-D-erythritol 4-phosphate (MEP). This chain is 2-C-methyl-D-erythritol 4-phosphate cytidylyltransferase, found in Thermosipho africanus (strain TCF52B).